We begin with the raw amino-acid sequence, 415 residues long: Teichoic acid D-alanyltransferase (415 aa).

Topologically, residues 1-16 (MIDFLKQLPHLEPYGN) are extracellular. A helical transmembrane segment spans residues 17–36 (PFYFIYLGIALLPIFIGLFF). Residues 37 to 40 (KKRF) lie on the Cytoplasmic side of the membrane. Residues 41–56 (AIYECLVSITFIVLAL) traverse the membrane as a helical segment. Topologically, residues 57–60 (TGTH) are extracellular. A helical transmembrane segment spans residues 61–87 (ASQILALLFYIVWQIIWVYSYKRYRSQ). Over 88-90 (RDN) the chain is Cytoplasmic. A helical membrane pass occupies residues 91-115 (KWVFYLHSFLVVLPLILVKVEPTIN). Residues 116–125 (GTQSLLNFLG) lie on the Extracellular side of the membrane. A helical membrane pass occupies residues 126-142 (ISYLTFRAVGMIIEMRD). Topologically, residues 143–149 (GVLKEFT) are cytoplasmic. An intramembrane segment occupies 150 to 179 (LGEFLRFMLFMPTFTSGPIDRFKRFNEDYQ). Residues 180–183 (SIPN) lie on the Cytoplasmic side of the membrane. A helical membrane pass occupies residues 184–227 (RDELLNMLEQAVKYIMLGFLYKFVLAQIFGSMLLPPLKAQALSQ). Topologically, residues 228–232 (GGIFN) are extracellular. A helical transmembrane segment spans residues 233-264 (LPTLGVMYVYGFDLFFDFAGYSMFALAVSNLM). The Cytoplasmic segment spans residues 265–274 (GIKSPINFDK). An intramembrane segment occupies 275–311 (PFISRDMKEFWNRWHMSLSFWFRDFVFMRLVIVLMRN). Residues 312–316 (KVFKN) are Cytoplasmic-facing. Residues 317-336 (RNTTSNVAYIINMMVMGFWH) form a helical membrane-spanning segment. H336 is an active-site residue. The Extracellular portion of the chain corresponds to 337–339 (GIT). A helical membrane pass occupies residues 340–373 (WYYIAYGIFHGIGLVINDAWLRKKKTINKDRKKA). Over 374-381 (GLKPLPEN) the chain is Cytoplasmic. A helical membrane pass occupies residues 382 to 404 (KWTKALGIFITFNTVMLSFLIFS). Topologically, residues 405–415 (GFLNDLWFTKK) are extracellular.

It belongs to the membrane-bound acyltransferase family.

The protein resides in the cell membrane. It participates in cell wall biogenesis; lipoteichoic acid biosynthesis. Functionally, O-acyltransferase that catalyzes D-alanylation of both teichoic acid and lipoteichoic acid (LTA). D-alanylation of LTA plays an important role in modulating the properties of the cell wall in Gram-positive bacteria, influencing the net charge of the cell wall. Catalyzes D-alanylation from DltC carrier protein. This is Teichoic acid D-alanyltransferase from Streptococcus thermophilus (strain ATCC BAA-250 / LMG 18311).